We begin with the raw amino-acid sequence, 334 residues long: Eukaryotic translation initiation factor 3 subunit H (334 aa).

The MPN domain maps to 20–152 (VQCDGLAAMK…LKAYRLTPQA (133 aa)).

Belongs to the eIF-3 subunit H family. In terms of assembly, component of the eukaryotic translation initiation factor 3 (eIF-3) complex.

The protein localises to the cytoplasm. In terms of biological role, component of the eukaryotic translation initiation factor 3 (eIF-3) complex, which is involved in protein synthesis of a specialized repertoire of mRNAs and, together with other initiation factors, stimulates binding of mRNA and methionyl-tRNAi to the 40S ribosome. The eIF-3 complex specifically targets and initiates translation of a subset of mRNAs involved in cell proliferation. The polypeptide is Eukaryotic translation initiation factor 3 subunit H (Anopheles gambiae (African malaria mosquito)).